The following is a 218-amino-acid chain: Adenylate kinase (218 aa).

ATP is bound at residue 10 to 15 (GAGKGT). Positions 30–59 (STGDMLRAAVKAGTPLGIEAKKVMDSGGLV) are NMP. Residues Thr31, Arg36, 57–59 (GLV), 85–88 (GFPR), and Gln92 each bind AMP. Residues 122–159 (GRRSHSASGRTYHVKYNPPKVEGLDDVTGEPLIQREDD) are LID. Residues Arg123 and 132–133 (TY) each bind ATP. Positions 156 and 167 each coordinate AMP. Gly203 provides a ligand contact to ATP.

The protein belongs to the adenylate kinase family. Monomer.

It localises to the cytoplasm. It carries out the reaction AMP + ATP = 2 ADP. It functions in the pathway purine metabolism; AMP biosynthesis via salvage pathway; AMP from ADP: step 1/1. In terms of biological role, catalyzes the reversible transfer of the terminal phosphate group between ATP and AMP. Plays an important role in cellular energy homeostasis and in adenine nucleotide metabolism. The chain is Adenylate kinase from Polaromonas naphthalenivorans (strain CJ2).